We begin with the raw amino-acid sequence, 368 residues long: Isocitrate dehydrogenase [NAD] regulatory subunit 3, mitochondrial (368 aa).

A mitochondrion-targeting transit peptide spans 1 to 26 (MARRSVSIFNRLLANPPSPFTSLSRS).

It belongs to the isocitrate and isopropylmalate dehydrogenases family. As to quaternary structure, heterooligomer of catalytic and regulatory subunits. Interacts with 14-3-3-like proteins GRF1 GRF3 and GRF8. As to expression, mainly expressed at a low level in pollen.

It localises to the mitochondrion. Functionally, performs an essential role in the oxidative function of the citric acid cycle. The sequence is that of Isocitrate dehydrogenase [NAD] regulatory subunit 3, mitochondrial (IDH3) from Arabidopsis thaliana (Mouse-ear cress).